A 78-amino-acid chain; its full sequence is Large ribosomal subunit protein bL28 (78 aa).

This sequence belongs to the bacterial ribosomal protein bL28 family.

The polypeptide is Large ribosomal subunit protein bL28 (Ruthia magnifica subsp. Calyptogena magnifica).